Here is a 333-residue protein sequence, read N- to C-terminus: Ornithine carbamoyltransferase (333 aa).

Residues 56–59 (STRT), Gln-83, Arg-107, and 134–137 (HPTQ) each bind carbamoyl phosphate. Residues Asn-167, Asp-231, and 235 to 236 (SM) each bind L-ornithine. Carbamoyl phosphate contacts are provided by residues 273-274 (CL) and Arg-318.

This sequence belongs to the aspartate/ornithine carbamoyltransferase superfamily. OTCase family.

It is found in the cytoplasm. It carries out the reaction carbamoyl phosphate + L-ornithine = L-citrulline + phosphate + H(+). The protein operates within amino-acid biosynthesis; L-arginine biosynthesis; L-arginine from L-ornithine and carbamoyl phosphate: step 1/3. In terms of biological role, reversibly catalyzes the transfer of the carbamoyl group from carbamoyl phosphate (CP) to the N(epsilon) atom of ornithine (ORN) to produce L-citrulline. The protein is Ornithine carbamoyltransferase (argF) of Staphylococcus aureus (strain COL).